Here is a 116-residue protein sequence, read N- to C-terminus: uncharacterized protein (116 aa).

2 disordered regions span residues 1–26 (MLLT…KSSN) and 74–116 (ENDL…KSSI). Low complexity predominate over residues 14–26 (SANSTDDSSKSSN). The segment covering 74–86 (ENDLKRSKSQGRE) has biased composition (basic and acidic residues). The segment covering 104–116 (NTASEIQRTKSSI) has biased composition (polar residues).

This is an uncharacterized protein from Saccharomyces cerevisiae (strain ATCC 204508 / S288c) (Baker's yeast).